The chain runs to 210 residues: Type III pantothenate kinase (210 aa).

5–12 (DIGNTYLH) provides a ligand contact to ATP. Residues Y69 and 73 to 76 (GVDR) contribute to the substrate site. Catalysis depends on D75, which acts as the Proton acceptor. Position 90 (D90) interacts with K(+). S93 serves as a coordination point for ATP. T145 is a substrate binding site.

This sequence belongs to the type III pantothenate kinase family. In terms of assembly, homodimer. The cofactor is NH4(+). K(+) is required as a cofactor.

The protein resides in the cytoplasm. The enzyme catalyses (R)-pantothenate + ATP = (R)-4'-phosphopantothenate + ADP + H(+). Its pathway is cofactor biosynthesis; coenzyme A biosynthesis; CoA from (R)-pantothenate: step 1/5. Catalyzes the phosphorylation of pantothenate (Pan), the first step in CoA biosynthesis. In Wolinella succinogenes (strain ATCC 29543 / DSM 1740 / CCUG 13145 / JCM 31913 / LMG 7466 / NCTC 11488 / FDC 602W) (Vibrio succinogenes), this protein is Type III pantothenate kinase.